The sequence spans 461 residues: CBL-interacting protein kinase 1 (461 aa).

The Protein kinase domain occupies 19–274 (YEIGRTLGEG…IAGIKEHEWF (256 aa)). Residues 25-33 (LGEGNFGKV) and lysine 48 contribute to the ATP site. Aspartate 142 functions as the Proton acceptor in the catalytic mechanism. Residues 160 to 189 (DFGLSALPQHLGNDGLLHTTCGSPNYIAPE) are activation loop. One can recognise an NAF domain in the interval 308-332 (EKPTHINAFQLIGMASALDLSGFFE). The tract at residues 338–367 (QRKIRFTSTHSPKDLFDKIENVVTEMGFQV) is PPI.

This sequence belongs to the protein kinase superfamily. CAMK Ser/Thr protein kinase family. SNF1 subfamily. The cofactor is Mn(2+).

The catalysed reaction is L-seryl-[protein] + ATP = O-phospho-L-seryl-[protein] + ADP + H(+). The enzyme catalyses L-threonyl-[protein] + ATP = O-phospho-L-threonyl-[protein] + ADP + H(+). Its function is as follows. CIPK serine-threonine protein kinases interact with CBL proteins. Binding of a CBL protein to the regulatory NAF domain of CIPK protein lead to the activation of the kinase in a calcium-dependent manner. This Oryza sativa subsp. japonica (Rice) protein is CBL-interacting protein kinase 1 (CIPK1).